The primary structure comprises 261 residues: MSESLRLTRNGPILEITLDRPKANAIDARTSFAMGEAFLSFRDDPHLRVAIITGAGEKFFSAGWDLKAAAEGEAPDADFGPGGFAGLTELFDLNKPVIAAVNGYAFGGGFELALAADFIICADHASFALPEAKLGIVPDSGGVLRLPKILPPAIVNDMVMTGRRMTAEEALRWGVVNRVVSPHELLDSARELARQLVQSAPLAVAALKEITRTTRDMSVEEGYRYIRSGSLRHYPAVLHSEDALEGPLAFAEKRDPEWKGH.

Residue glutamate 111 is the Nucleophile of the active site. Residue glutamate 131 is the Proton acceptor of the active site.

It belongs to the enoyl-CoA hydratase/isomerase family.

It carries out the reaction (R)-carnitinyl-CoA = crotonobetainyl-CoA + H2O. It functions in the pathway amine and polyamine metabolism; carnitine metabolism. In terms of biological role, catalyzes the reversible dehydration of L-carnitinyl-CoA to crotonobetainyl-CoA. The chain is Carnitinyl-CoA dehydratase from Salmonella arizonae (strain ATCC BAA-731 / CDC346-86 / RSK2980).